Consider the following 482-residue polypeptide: Adenylosuccinate lyase (482 aa).

Residues 14–15 (RY), 82–84 (RHD), and 108–109 (TS) each bind substrate. The active-site Proton donor/acceptor is His156. Gln238 contributes to the substrate binding site. The active-site Proton donor/acceptor is the Ser286. Residues Arg300, Arg326, Ser331, and Arg335 each contribute to the substrate site.

This sequence belongs to the lyase 1 family. Adenylosuccinate lyase subfamily. In terms of assembly, homotetramer. Residues from neighboring subunits contribute catalytic and substrate-binding residues to each active site.

The catalysed reaction is N(6)-(1,2-dicarboxyethyl)-AMP = fumarate + AMP. It catalyses the reaction (2S)-2-[5-amino-1-(5-phospho-beta-D-ribosyl)imidazole-4-carboxamido]succinate = 5-amino-1-(5-phospho-beta-D-ribosyl)imidazole-4-carboxamide + fumarate. It functions in the pathway purine metabolism; AMP biosynthesis via de novo pathway; AMP from IMP: step 2/2. The protein operates within purine metabolism; IMP biosynthesis via de novo pathway; 5-amino-1-(5-phospho-D-ribosyl)imidazole-4-carboxamide from 5-amino-1-(5-phospho-D-ribosyl)imidazole-4-carboxylate: step 2/2. The protein is Adenylosuccinate lyase (ade8) of Schizosaccharomyces pombe (strain 972 / ATCC 24843) (Fission yeast).